A 575-amino-acid chain; its full sequence is Beta-amylase (575 aa).

Positions 1-36 (MLHSQKRIWKKIGLCLLSFILGITVFTGSFGSKAEA) are cleaved as a signal peptide. Substrate is bound at residue D77. Ca(2+) contacts are provided by E84 and D88. The substrate site is built by H117 and D125. C119 and C127 form a disulfide bridge. Position 171 (E171) interacts with Ca(2+). The active-site Proton donor is the E199. K315, H320, and T358 together coordinate substrate. The active-site Proton acceptor is E395. Substrate contacts are provided by residues 396–397 (NA) and R424.

It belongs to the glycosyl hydrolase 14 family. Monomer. It depends on Ca(2+) as a cofactor.

The catalysed reaction is Hydrolysis of (1-&gt;4)-alpha-D-glucosidic linkages in polysaccharides so as to remove successive maltose units from the non-reducing ends of the chains.. This chain is Beta-amylase, found in Niallia circulans (Bacillus circulans).